A 142-amino-acid polypeptide reads, in one-letter code: Large ribosomal subunit protein uL13 (142 aa).

Belongs to the universal ribosomal protein uL13 family. In terms of assembly, part of the 50S ribosomal subunit.

This protein is one of the early assembly proteins of the 50S ribosomal subunit, although it is not seen to bind rRNA by itself. It is important during the early stages of 50S assembly. The chain is Large ribosomal subunit protein uL13 from Burkholderia mallei (strain NCTC 10247).